An 850-amino-acid chain; its full sequence is AdoMet-dependent rRNA methyltransferase SPB1 (850 aa).

Positions 58, 60, 78, 94, and 119 each coordinate S-adenosyl-L-methionine. Residue Lys-159 is the Proton acceptor of the active site. Polar residues predominate over residues 273–282 (GETNEMTWTP). Disordered stretches follow at residues 273–305 (GETN…ARDE), 388–414 (IDKE…NEMK), 529–569 (GISD…RTLN), and 620–646 (AKKN…KQDD). Basic and acidic residues predominate over residues 388–400 (IDKELSELGEREK). A coiled-coil region spans residues 397–425 (EREKARKKRERRRRNEMKQREIQRMQMNM). Positions 401–411 (ARKKRERRRRN) are enriched in basic residues. 2 stretches are compositionally biased toward acidic residues: residues 537–561 (DESD…DEDD) and 628–638 (SDSEDEEDDIV). A coiled-coil region spans residues 746-773 (LEAKGRKKMRALRRLEQMKKKSELINED). Residues 811–850 (KNKGIAGRPRGVTGKYKMVDGTMKKEQRAIRRIKKKMGKK) are disordered. Basic residues predominate over residues 840-850 (IRRIKKKMGKK).

The protein belongs to the class I-like SAM-binding methyltransferase superfamily. RNA methyltransferase RlmE family. SPB1 subfamily. As to quaternary structure, component of the nucleolar and nucleoplasmic pre-60S ribosomal particle.

It localises to the nucleus. The protein localises to the nucleolus. It catalyses the reaction a ribonucleotide in rRNA + S-adenosyl-L-methionine = a 2'-O-methylribonucleotide in rRNA + S-adenosyl-L-homocysteine + H(+). Functionally, required for proper assembly of pre-ribosomal particles during the biogenesis of the 60S ribosomal subunit. This is AdoMet-dependent rRNA methyltransferase SPB1 from Yarrowia lipolytica (strain CLIB 122 / E 150) (Yeast).